Reading from the N-terminus, the 699-residue chain is Integrator complex subunit 10 (699 aa).

Ser220 and Ser370 each carry phosphoserine. A Glycyl lysine isopeptide (Lys-Gly) (interchain with G-Cter in SUMO2) cross-link involves residue Lys453.

It belongs to the Integrator subunit 10 family. Component of the Integrator complex, composed of core subunits INTS1, INTS2, INTS3, INTS4, INTS5, INTS6, INTS7, INTS8, INTS9/RC74, INTS10, INTS11/CPSF3L, INTS12, INTS13, INTS14 and INTS15. The core complex associates with protein phosphatase 2A subunits PPP2CA and PPP2R1A, to form the Integrator-PP2A (INTAC) complex. INTS10 is part of the tail subcomplex, composed of INTS10, INTS13, INTS14 and INTS15.

It localises to the nucleus. Its function is as follows. Component of the integrator complex, a multiprotein complex that terminates RNA polymerase II (Pol II) transcription in the promoter-proximal region of genes. The integrator complex provides a quality checkpoint during transcription elongation by driving premature transcription termination of transcripts that are unfavorably configured for transcriptional elongation: the complex terminates transcription by (1) catalyzing dephosphorylation of the C-terminal domain (CTD) of Pol II subunit POLR2A/RPB1 and SUPT5H/SPT5, (2) degrading the exiting nascent RNA transcript via endonuclease activity and (3) promoting the release of Pol II from bound DNA. The integrator complex is also involved in terminating the synthesis of non-coding Pol II transcripts, such as enhancer RNAs (eRNAs), small nuclear RNAs (snRNAs), telomerase RNAs and long non-coding RNAs (lncRNAs). Within the integrator complex, INTS10 is part of the integrator tail module that acts as a platform for the recruitment of transcription factors at promoters. May be not involved in the recruitment of cytoplasmic dynein to the nuclear envelope, probably as component of the integrator complex. This is Integrator complex subunit 10 (INTS10) from Macaca fascicularis (Crab-eating macaque).